The following is a 389-amino-acid chain: Chalcone synthase 2 (389 aa).

The active site involves Cys164.

This sequence belongs to the thiolase-like superfamily. Chalcone/stilbene synthases family.

The enzyme catalyses (E)-4-coumaroyl-CoA + 3 malonyl-CoA + 3 H(+) = 2',4,4',6'-tetrahydroxychalcone + 3 CO2 + 4 CoA. The protein operates within secondary metabolite biosynthesis; flavonoid biosynthesis. Functionally, the primary product of this enzyme is 4,2',4',6'-tetrahydroxychalcone (also termed naringenin-chalcone or chalcone) which can under specific conditions spontaneously isomerize into naringenin. The chain is Chalcone synthase 2 (CHS2) from Trifolium subterraneum (Subterranean clover).